Consider the following 444-residue polypeptide: ATP-dependent protease ATPase subunit HslU (444 aa).

ATP is bound by residues Ile-18, 60–65 (GVGKTE), Asp-256, Glu-322, and Arg-394.

Belongs to the ClpX chaperone family. HslU subfamily. In terms of assembly, a double ring-shaped homohexamer of HslV is capped on each side by a ring-shaped HslU homohexamer. The assembly of the HslU/HslV complex is dependent on binding of ATP.

It localises to the cytoplasm. In terms of biological role, ATPase subunit of a proteasome-like degradation complex; this subunit has chaperone activity. The binding of ATP and its subsequent hydrolysis by HslU are essential for unfolding of protein substrates subsequently hydrolyzed by HslV. HslU recognizes the N-terminal part of its protein substrates and unfolds these before they are guided to HslV for hydrolysis. The chain is ATP-dependent protease ATPase subunit HslU from Buchnera aphidicola subsp. Cinara cedri (strain Cc).